Here is a 461-residue protein sequence, read N- to C-terminus: Photosystem II CP43 reaction center protein (461 aa).

The propeptide occupies 1 to 2 (ME). Position 3 is an N-acetylthreonine (T3). Position 3 is a phosphothreonine (T3). 5 helical membrane-spanning segments follow: residues 57–81 (LFEV…PHIA), 122–143 (LIGP…KDKN), 166–188 (KAMY…RIIT), 243–263 (TPWP…LSYS), and 279–300 (WFNN…ASQA). E355 provides a ligand contact to [CaMn4O5] cluster. The chain crosses the membrane as a helical span at residues 435-459 (RARAAAAGFEKGIDRVDEPVLSMRP).

Belongs to the PsbB/PsbC family. PsbC subfamily. As to quaternary structure, PSII is composed of 1 copy each of membrane proteins PsbA, PsbB, PsbC, PsbD, PsbE, PsbF, PsbH, PsbI, PsbJ, PsbK, PsbL, PsbM, PsbT, PsbX, PsbY, PsbZ, Psb30/Ycf12, at least 3 peripheral proteins of the oxygen-evolving complex and a large number of cofactors. It forms dimeric complexes. The cofactor is Binds multiple chlorophylls and provides some of the ligands for the Ca-4Mn-5O cluster of the oxygen-evolving complex. It may also provide a ligand for a Cl- that is required for oxygen evolution. PSII binds additional chlorophylls, carotenoids and specific lipids..

It is found in the plastid. Its subcellular location is the chloroplast thylakoid membrane. Functionally, one of the components of the core complex of photosystem II (PSII). It binds chlorophyll and helps catalyze the primary light-induced photochemical processes of PSII. PSII is a light-driven water:plastoquinone oxidoreductase, using light energy to abstract electrons from H(2)O, generating O(2) and a proton gradient subsequently used for ATP formation. In Chlamydomonas moewusii (Chlamydomonas eugametos), this protein is Photosystem II CP43 reaction center protein.